The sequence spans 592 residues: uncharacterized protein (592 aa).

A run of 6 helical transmembrane segments spans residues 12–32 (IWIL…IFLL), 58–78 (PILF…ISLV), 102–122 (MGLF…SYYL), 191–211 (ISYT…GVEI), 214–234 (MMVF…FWLG), and 299–319 (FSGF…LIQV). One can recognise an ABC transmembrane type-1 domain in the interval 58–358 (PILFFLLIVA…FRSTYDNFAS (301 aa)). The ABC transporter domain maps to 391–592 (VIFKNLSIQN…LQDKGQWQVL (202 aa)). 424–431 (GKSGAGKT) lines the ATP pocket.

The protein belongs to the ABC transporter superfamily.

Its subcellular location is the cell inner membrane. This is an uncharacterized protein from Haemophilus influenzae (strain ATCC 51907 / DSM 11121 / KW20 / Rd).